The chain runs to 222 residues: MSTSSSASALGRRAGPLDGLIGEIDRALRVLSGAATAARPYPAQAPEAPDALSEREKRHAAGLMRVNHVGEVCAQALYRGQAAACREPAARALLREAAAEEVDHLAWCHERLRELGSRPSLLNPFWYTGSFALGVLASYAGVPRNLGFMAETERQVEAHLDGHLRTLPVQDQRSRDIVQKMKEDEAQHRASAERAGGVPLPAPVRGAMRAMSKVMTSTAYWL.

Residues Glu-71, Glu-101, His-104, Glu-153, Glu-185, and His-188 each coordinate Fe cation.

This sequence belongs to the COQ7 family. The cofactor is Fe cation.

The protein localises to the cell membrane. The catalysed reaction is a 5-methoxy-2-methyl-3-(all-trans-polyprenyl)benzene-1,4-diol + AH2 + O2 = a 3-demethylubiquinol + A + H2O. The protein operates within cofactor biosynthesis; ubiquinone biosynthesis. Catalyzes the hydroxylation of 2-nonaprenyl-3-methyl-6-methoxy-1,4-benzoquinol during ubiquinone biosynthesis. The protein is 3-demethoxyubiquinol 3-hydroxylase of Bordetella pertussis (strain Tohama I / ATCC BAA-589 / NCTC 13251).